We begin with the raw amino-acid sequence, 478 residues long: Aspartyl/glutamyl-tRNA(Asn/Gln) amidotransferase subunit B (478 aa).

This sequence belongs to the GatB/GatE family. GatB subfamily. As to quaternary structure, heterotrimer of A, B and C subunits.

It carries out the reaction L-glutamyl-tRNA(Gln) + L-glutamine + ATP + H2O = L-glutaminyl-tRNA(Gln) + L-glutamate + ADP + phosphate + H(+). It catalyses the reaction L-aspartyl-tRNA(Asn) + L-glutamine + ATP + H2O = L-asparaginyl-tRNA(Asn) + L-glutamate + ADP + phosphate + 2 H(+). In terms of biological role, allows the formation of correctly charged Asn-tRNA(Asn) or Gln-tRNA(Gln) through the transamidation of misacylated Asp-tRNA(Asn) or Glu-tRNA(Gln) in organisms which lack either or both of asparaginyl-tRNA or glutaminyl-tRNA synthetases. The reaction takes place in the presence of glutamine and ATP through an activated phospho-Asp-tRNA(Asn) or phospho-Glu-tRNA(Gln). This Dichelobacter nodosus (strain VCS1703A) protein is Aspartyl/glutamyl-tRNA(Asn/Gln) amidotransferase subunit B.